The following is a 268-amino-acid chain: Tryptophan synthase alpha chain (268 aa).

Residues Glu49 and Asp60 each act as proton acceptor in the active site.

Belongs to the TrpA family. As to quaternary structure, tetramer of two alpha and two beta chains.

It catalyses the reaction (1S,2R)-1-C-(indol-3-yl)glycerol 3-phosphate + L-serine = D-glyceraldehyde 3-phosphate + L-tryptophan + H2O. It functions in the pathway amino-acid biosynthesis; L-tryptophan biosynthesis; L-tryptophan from chorismate: step 5/5. The alpha subunit is responsible for the aldol cleavage of indoleglycerol phosphate to indole and glyceraldehyde 3-phosphate. This chain is Tryptophan synthase alpha chain, found in Escherichia fergusonii (strain ATCC 35469 / DSM 13698 / CCUG 18766 / IAM 14443 / JCM 21226 / LMG 7866 / NBRC 102419 / NCTC 12128 / CDC 0568-73).